The sequence spans 349 residues: tRNA (guanine(26)-N(2))-dimethyltransferase (349 aa).

Residues 1-343 (MEVEEGRARV…ADRDVVVKIL (343 aa)) enclose the Trm1 methyltransferase domain. S-adenosyl-L-methionine contacts are provided by R25, R50, D66, D92, and A93.

Belongs to the class I-like SAM-binding methyltransferase superfamily. Trm1 family.

It catalyses the reaction guanosine(26) in tRNA + 2 S-adenosyl-L-methionine = N(2)-dimethylguanosine(26) in tRNA + 2 S-adenosyl-L-homocysteine + 2 H(+). Dimethylates a single guanine residue at position 26 of a number of tRNAs using S-adenosyl-L-methionine as donor of the methyl groups. The chain is tRNA (guanine(26)-N(2))-dimethyltransferase from Archaeoglobus fulgidus (strain ATCC 49558 / DSM 4304 / JCM 9628 / NBRC 100126 / VC-16).